We begin with the raw amino-acid sequence, 230 residues long: Protein RESPONSE TO ABA AND SALT 1 (230 aa).

The region spanning 7 to 230 (SQSFTIFVDG…RLRDRDQERA (224 aa)) is the DOG1 domain.

In terms of biological role, negative regulator of salt (NaCl) tolerance probably by enhancing abscisic acid (ABA) sensitivity. The protein is Protein RESPONSE TO ABA AND SALT 1 of Arabidopsis thaliana (Mouse-ear cress).